The chain runs to 212 residues: LexA repressor (212 aa).

Positions 29 to 49 form a DNA-binding region, H-T-H motif; sequence VREIGEAVGLSSSSTIHGHIE. Active-site for autocatalytic cleavage activity residues include Ser133 and Lys171.

The protein belongs to the peptidase S24 family. In terms of assembly, homodimer.

The enzyme catalyses Hydrolysis of Ala-|-Gly bond in repressor LexA.. Functionally, represses a number of genes involved in the response to DNA damage (SOS response), including recA and lexA. In the presence of single-stranded DNA, RecA interacts with LexA causing an autocatalytic cleavage which disrupts the DNA-binding part of LexA, leading to derepression of the SOS regulon and eventually DNA repair. The polypeptide is LexA repressor (Leuconostoc mesenteroides subsp. mesenteroides (strain ATCC 8293 / DSM 20343 / BCRC 11652 / CCM 1803 / JCM 6124 / NCDO 523 / NBRC 100496 / NCIMB 8023 / NCTC 12954 / NRRL B-1118 / 37Y)).